The primary structure comprises 145 residues: Large ribosomal subunit protein uL13 (145 aa).

This sequence belongs to the universal ribosomal protein uL13 family. Part of the 50S ribosomal subunit.

Its function is as follows. This protein is one of the early assembly proteins of the 50S ribosomal subunit, although it is not seen to bind rRNA by itself. It is important during the early stages of 50S assembly. The protein is Large ribosomal subunit protein uL13 of Halobacterium salinarum (strain ATCC 700922 / JCM 11081 / NRC-1) (Halobacterium halobium).